Reading from the N-terminus, the 332-residue chain is DNA-directed RNA polymerase subunit alpha (332 aa).

The segment at 1–232 (MQVSNFLKPR…DQLTAFVELE (232 aa)) is alpha N-terminal domain (alpha-NTD). Positions 246–332 (IDPVLLQPID…LREEETKVTA (87 aa)) are alpha C-terminal domain (alpha-CTD).

The protein belongs to the RNA polymerase alpha chain family. As to quaternary structure, homodimer. The RNAP catalytic core consists of 2 alpha, 1 beta, 1 beta' and 1 omega subunit. When a sigma factor is associated with the core the holoenzyme is formed, which can initiate transcription.

It carries out the reaction RNA(n) + a ribonucleoside 5'-triphosphate = RNA(n+1) + diphosphate. In terms of biological role, DNA-dependent RNA polymerase catalyzes the transcription of DNA into RNA using the four ribonucleoside triphosphates as substrates. This chain is DNA-directed RNA polymerase subunit alpha, found in Nitrosococcus oceani (strain ATCC 19707 / BCRC 17464 / JCM 30415 / NCIMB 11848 / C-107).